A 525-amino-acid polypeptide reads, in one-letter code: Glutathione hydrolase-like YwrD proenzyme (525 aa).

The Nucleophile role is filled by T339.

Belongs to the gamma-glutamyltransferase family. In terms of assembly, this enzyme consists of two polypeptide chains, which are synthesized from a single polypeptide. Post-translationally, cleaved by autocatalysis into a large and a small subunit.

The catalysed reaction is an N-terminal (5-L-glutamyl)-[peptide] + an alpha-amino acid = 5-L-glutamyl amino acid + an N-terminal L-alpha-aminoacyl-[peptide]. The enzyme catalyses glutathione + H2O = L-cysteinylglycine + L-glutamate. It carries out the reaction an S-substituted glutathione + H2O = an S-substituted L-cysteinylglycine + L-glutamate. Its function is as follows. Overexpressed protein with an N-terminal His tag has been reported not to hydrolyze glutathione; it is not clear if the construct is processed to 2 subunits. The protein is Glutathione hydrolase-like YwrD proenzyme (ywrD) of Bacillus subtilis (strain 168).